The chain runs to 533 residues: Beta-1,2-xylosyltransferase RCN11 (533 aa).

Residues 1–23 (MMPVRTYHHHHHHNNSNNHRLRR) are Cytoplasmic-facing. The helical; Signal-anchor for type II membrane protein transmembrane segment at 24–44 (IIPRVLLAVFAIYAVSFAAYL) threads the bilayer. The Lumenal portion of the chain corresponds to 45-533 (LRHQSPHPHP…LSNILKGFGC (489 aa)). Positions 51–78 (HPHPHPAADPERDAVDAAGGGGGGGAVD) are disordered. Residues 56–65 (PAADPERDAV) show a composition bias toward basic and acidic residues. N-linked (GlcNAc...) asparagine glycans are attached at residues asparagine 307 and asparagine 313.

This sequence belongs to the glycosyltransferase 61 family. Expressed at the base of the crown roots and in the basal region of the shoot, which contains the shoot and axillary meristems.

It is found in the golgi apparatus membrane. The protein operates within glycan metabolism. Functionally, glycosyltransferase involved in the xylosylation of N-glycans. Possesses beta-1,2-xylosyltransferase activity, transferring xylose from UDP-xylose to the core beta-linked mannose of N-glycans. Beta-1,2-linked xylose residues on N-glycans are critical for seed germination and plant development and growth under conditions of abiotic stress. This is Beta-1,2-xylosyltransferase RCN11 from Oryza sativa subsp. japonica (Rice).